The sequence spans 191 residues: Peptidyl-tRNA hydrolase (191 aa).

Y14 is a binding site for tRNA. H19 serves as the catalytic Proton acceptor. The tRNA site is built by F64, N66, and N113.

It belongs to the PTH family. As to quaternary structure, monomer.

Its subcellular location is the cytoplasm. The catalysed reaction is an N-acyl-L-alpha-aminoacyl-tRNA + H2O = an N-acyl-L-amino acid + a tRNA + H(+). Hydrolyzes ribosome-free peptidyl-tRNAs (with 1 or more amino acids incorporated), which drop off the ribosome during protein synthesis, or as a result of ribosome stalling. Its function is as follows. Catalyzes the release of premature peptidyl moieties from peptidyl-tRNA molecules trapped in stalled 50S ribosomal subunits, and thus maintains levels of free tRNAs and 50S ribosomes. This chain is Peptidyl-tRNA hydrolase, found in Fusobacterium nucleatum subsp. nucleatum (strain ATCC 25586 / DSM 15643 / BCRC 10681 / CIP 101130 / JCM 8532 / KCTC 2640 / LMG 13131 / VPI 4355).